A 317-amino-acid chain; its full sequence is Eukaryotic translation initiation factor 2 subunit 2 (317 aa).

Positions 1 to 146 (MSATEEENVL…KEKTITTSDG (146 aa)) are disordered. The segment covering 79–90 (AIEKLENEGAHD) has biased composition (basic and acidic residues). Residues 109–125 (KSSTTTTTSTTTTTTEP) show a composition bias toward low complexity. The segment at 222–246 (HVYNYVFAELGTNGSIDGNQRLVIR) adopts a C4-type zinc-finger fold.

Belongs to the eIF-2-beta/eIF-5 family. In terms of assembly, eukaryotic translation initiation factor 2 eIF2 is a heterotrimeric complex composed of an alpha, a beta and a gamma subunit.

It localises to the cytoplasm. It is found in the cytosol. Its function is as follows. Component of the eIF2 complex that functions in the early steps of protein synthesis by forming a ternary complex with GTP and initiator tRNA. This complex binds to a 40S ribosomal subunit, followed by mRNA binding to form a 43S pre-initiation complex (43S PIC). Junction of the 60S ribosomal subunit to form the 80S initiation complex is preceded by hydrolysis of the GTP bound to eIF2 and release of an eIF2-GDP binary complex. In order for eIF2 to recycle and catalyze another round of initiation, the GDP bound to eIF2 must exchange with GTP by way of a reaction catalyzed by eIF2B. The chain is Eukaryotic translation initiation factor 2 subunit 2 (eif2s2) from Dictyostelium discoideum (Social amoeba).